We begin with the raw amino-acid sequence, 120 residues long: NADH dehydrogenase [ubiquinone] 1 subunit C2 (120 aa).

Met-1 is modified (N-acetylmethionine). Residues 57–76 traverse the membrane as a helical segment; the sequence is GLHRQLLYITSFVFVGYYLL.

It belongs to the complex I NDUFC2 subunit family. Complex I is composed of 45 different subunits. Interacts with TMEM242. In terms of processing, there is a minor unacetylated form of subunit B14.5b.

Its subcellular location is the mitochondrion inner membrane. Accessory subunit of the mitochondrial membrane respiratory chain NADH dehydrogenase (Complex I), that is believed not to be involved in catalysis but required for the complex assembly. Complex I functions in the transfer of electrons from NADH to the respiratory chain. The immediate electron acceptor for the enzyme is believed to be ubiquinone. The chain is NADH dehydrogenase [ubiquinone] 1 subunit C2 from Bos taurus (Bovine).